The chain runs to 754 residues: 5-methyltetrahydropteroyltriglutamate--homocysteine methyltransferase (754 aa).

5-methyltetrahydropteroyltri-L-glutamate-binding positions include 17 to 20 and Lys117; that span reads RELK. Residues 431-433 and Glu484 each bind L-homocysteine; that span reads IGS. Residues 431–433 and Glu484 each bind L-methionine; that span reads IGS. Residues 515 to 516 and Trp561 each bind 5-methyltetrahydropteroyltri-L-glutamate; that span reads RC. Asp599 contributes to the L-homocysteine binding site. Asp599 contacts L-methionine. Residue Glu605 participates in 5-methyltetrahydropteroyltri-L-glutamate binding. Residues His641, Cys643, and Glu665 each coordinate Zn(2+). His694 acts as the Proton donor in catalysis. Zn(2+) is bound at residue Cys726.

Belongs to the vitamin-B12 independent methionine synthase family. Requires Zn(2+) as cofactor.

It catalyses the reaction 5-methyltetrahydropteroyltri-L-glutamate + L-homocysteine = tetrahydropteroyltri-L-glutamate + L-methionine. It functions in the pathway amino-acid biosynthesis; L-methionine biosynthesis via de novo pathway; L-methionine from L-homocysteine (MetE route): step 1/1. In terms of biological role, catalyzes the transfer of a methyl group from 5-methyltetrahydrofolate to homocysteine resulting in methionine formation. In Pectobacterium atrosepticum (strain SCRI 1043 / ATCC BAA-672) (Erwinia carotovora subsp. atroseptica), this protein is 5-methyltetrahydropteroyltriglutamate--homocysteine methyltransferase.